Here is a 137-residue protein sequence, read N- to C-terminus: Profilin-3 (137 aa).

Belongs to the profilin family. As to quaternary structure, interacts with ACTRT3. Testis specific.

It is found in the cytoplasm. The protein localises to the cytoskeleton. Its subcellular location is the nucleus. Its function is as follows. Binds to actin and affects the structure of the cytoskeleton. Slightly reduces actin polymerization. Binds to poly-L-proline, phosphatidylinositol 3-phosphate (PtdIns(3)P), phosphatidylinositol 4,5-bisphosphate (PtdIns(4,5)P2) and phosphatidylinositol 4-phosphate (PtdIns(4)P). May be involved in spermatogenesis. The chain is Profilin-3 (PFN3) from Homo sapiens (Human).